The following is an 83-amino-acid chain: MSIFNYFLKKEKKSSASLAKERLQIIVAHERSKRQQPDYLPLMQKEIMDVIRKYVNIDEEQVIVQLDNNEDCSVLELNITLPE.

Belongs to the MinE family.

In terms of biological role, prevents the cell division inhibition by proteins MinC and MinD at internal division sites while permitting inhibition at polar sites. This ensures cell division at the proper site by restricting the formation of a division septum at the midpoint of the long axis of the cell. This Pseudoalteromonas atlantica (strain T6c / ATCC BAA-1087) protein is Cell division topological specificity factor.